Here is a 445-residue protein sequence, read N- to C-terminus: Xylose isomerase (445 aa).

Active-site residues include His-99 and Asp-102. Residues Glu-230, Glu-266, His-269, Asp-294, Asp-305, Asp-307, and Asp-337 each contribute to the Mg(2+) site.

Belongs to the xylose isomerase family. In terms of assembly, homotetramer. It depends on Mg(2+) as a cofactor.

It localises to the cytoplasm. The catalysed reaction is alpha-D-xylose = alpha-D-xylulofuranose. The protein is Xylose isomerase of Geobacillus thermodenitrificans (strain NG80-2).